A 582-amino-acid chain; its full sequence is Arginine--tRNA ligase (582 aa).

The 'HIGH' region signature appears at 136–146 (ANPTGPMHMGH).

It belongs to the class-I aminoacyl-tRNA synthetase family. In terms of assembly, monomer.

It localises to the cytoplasm. It carries out the reaction tRNA(Arg) + L-arginine + ATP = L-arginyl-tRNA(Arg) + AMP + diphosphate. This is Arginine--tRNA ligase from Novosphingobium aromaticivorans (strain ATCC 700278 / DSM 12444 / CCUG 56034 / CIP 105152 / NBRC 16084 / F199).